Here is a 276-residue protein sequence, read N- to C-terminus: Large ribosomal subunit protein uL2 (276 aa).

2 disordered regions span residues 36–55 and 219–276; these read PLPR…RHRG and TVRG…GRKK. A compositionally biased stretch (basic residues) spans 255-276; the sequence is LGKKTRKKKNRSNKLIVRGRKK.

Belongs to the universal ribosomal protein uL2 family. As to quaternary structure, part of the 50S ribosomal subunit. Forms a bridge to the 30S subunit in the 70S ribosome.

Functionally, one of the primary rRNA binding proteins. Required for association of the 30S and 50S subunits to form the 70S ribosome, for tRNA binding and peptide bond formation. It has been suggested to have peptidyltransferase activity; this is somewhat controversial. Makes several contacts with the 16S rRNA in the 70S ribosome. This chain is Large ribosomal subunit protein uL2, found in Macrococcus caseolyticus (strain JCSC5402) (Macrococcoides caseolyticum).